The primary structure comprises 579 residues: Small conductance calcium-activated potassium channel protein 2 (579 aa).

Disordered regions lie at residues 1–54 and 90–115; these read MSSC…AAAA and TGGG…KKNQ. Over residues 90–103 the composition is skewed to gly residues; sequence TGGGGGGGGSGHGS. The helical transmembrane segment at 138–158 threads the bilayer; the sequence is ALIFGMFGIVVMVIETELSWG. Phosphotyrosine is present on Tyr-160. A helical membrane pass occupies residues 168–188; the sequence is LALKCLISLSTIILLGLIIVY. A helical membrane pass occupies residues 214 to 234; that stretch reads IFFICLEILVCAIHPIPGNYT. A helical membrane pass occupies residues 256-276; the sequence is IILSIPMFLRLYLIARVMLLH. A helical membrane pass occupies residues 305–325; sequence LMTICPGTVLLVFSISLWIIA. The pore-forming intramembrane region spans 345–365; the sequence is FLGAMWLISITFLSIGYGDMV. A helical membrane pass occupies residues 374-394; the sequence is VCLLTGIMGAGCTALVVAVVA. Residues 412–488 form a calmodulin-binding region; it reads DTQLTKRVKN…LVDLAKTQNI (77 aa). Residues 551-579 are disordered; sequence VTYNAERSRSSSRRRRSSSTAPPTSSESS. Positions 568 to 579 are enriched in low complexity; sequence SSTAPPTSSESS.

It belongs to the potassium channel KCNN family. KCa2.2/KCNN2 subfamily. Homodimer. Heteromultimer with KCNN1 and KCNN3. The complex is composed of 4 channel subunits each of which binds to a calmodulin subunit which regulates the channel activity through calcium-binding. Interacts (via N-terminal domain) with MPP2. In terms of tissue distribution, expressed in atrial myocytes (at protein level). Widely expressed.

It is found in the membrane. The protein resides in the cytoplasm. It localises to the myofibril. Its subcellular location is the sarcomere. The protein localises to the z line. The enzyme catalyses K(+)(in) = K(+)(out). With respect to regulation, inhibited by bee venom neurotoxin apamin. Inhibited by UCL 1684 and tetraethylammonium (TEA). Small conductance calcium-activated potassium channel that mediates the voltage-independent transmembrane transfer of potassium across the cell membrane through a constitutive interaction with calmodulin which binds the intracellular calcium allowing its opening. The current is characterized by a voltage-independent activation, an intracellular calcium concentration increase-dependent activation and a single-channel conductance of about 3 picosiemens. Also presents an inwardly rectifying current, thus reducing its already small outward conductance of potassium ions, which is particularly the case when the membrane potential displays positive values, above + 20 mV. The inward rectification could be due to a blockade of the outward current by intracellular divalent cations such as calcium and magnesium and could also be due to an intrinsic property of the channel pore, independent of intracellular divalent ions. There are three positively charged amino acids in the S6 transmembrane domain, close to the pore, that collectively control the conductance and rectification through an electrostatic mechanism. Additionally, electrostatic contributions from these residues also play an important role in determining the intrinsic open probability of the channel in the absence of calcium, affecting the apparent calcium affinity for activation. Forms an heteromeric complex with calmodulin, which is constitutively associated in a calcium-independent manner. Channel opening is triggered when calcium binds the calmodulin resulting in a rotary movement leading to the formation of the dimeric complex to open the gate. Plays a role in the repolarization phase of cardiac action potential. This Homo sapiens (Human) protein is Small conductance calcium-activated potassium channel protein 2.